The chain runs to 185 residues: Celestoxin (185 aa).

The N-terminal stretch at 1-20 (MKFIAAVLLVALLCPKDSTS) is a signal peptide. The propeptide occupies 21-148 (LASRLSGLLG…GLPVALPVSV (128 aa)).

In terms of tissue distribution, expressed by the mandibular venom gland.

It localises to the secreted. Functionally, has a hypotensive activity. This Caribicus warreni (Haitian giant galliwasp) protein is Celestoxin.